Reading from the N-terminus, the 580-residue chain is Type 3 secretion system translocon protein SctE (580 aa).

IpgC chaperone binding domain regions lie at residues 15–45 (KILTSTELGDNTIQAANDAANKLFSLTIADL) and 51–72 (INTTNAHSTSNILIPELKAPKS). The tract at residues 61 to 70 (NILIPELKAP) is mediates interaction with human MAD2L2. A coiled-coil region spans residues 104 to 224 (AWKSQQQARQ…MQLEKEIDSF (121 aa)). The next 2 membrane-spanning stretches (helical) occupy residues 313–333 (ILGALLTIVSVVAAAFSGGAS) and 399–419 (IGSILGAIAGALVLVAAVVLV).

This sequence belongs to the SctE/SipB/YopB family. The core secretion machinery of the T3SS is composed of approximately 20 different proteins, including cytoplasmic components, a base, an export apparatus and a needle. This subunit is involved in the formation of a pore, called the translocon, in host membrane. Interacts with IpaC/SctB. Interacts with the needle tip protein IpaD/SctA. Interacts with the molecular chaperone IpgC, which prevents premature association with IpaC/SctB within the cytoplasm of Shigella cells and protects IpaB/SctE from proteolysis. Interacts with the host protein ICE in the cytoplasm of infected macrophages. Interacts with human MAD2L2 in the G2/M phase of the cell cycle.

The protein resides in the secreted. It is found in the host membrane. It localises to the host cell. The protein localises to the host nucleus. Its activity is regulated as follows. Interaction with the membrane is affected by the pH. IpaB/SctE is more efficient in destabilizing the membrane at pH 5.0 than at neutral pH. Component of the type III secretion system (T3SS), also called injectisome, which is used to inject bacterial effector proteins into eukaryotic host cells. IpaB/SctE and IpaC/SctB are inserted into the host membrane where they form a pore and allow the translocation of effector proteins into the cytosol of target cells. Interaction with IpaD/SctA at needle tips leads to the formation of the MxiH/SctF-IpaD/SctA-IpaB/SctE ternary complex, which is essential for host cell sensing. Interaction of IpaB/SctE with host membrane lipids promotes recruitment of IpaC/SctB at the needle tip concomitant with translocon insertion into the host membrane and type III secretion induction. In terms of biological role, required for efficient dissemination. Necessary for lysis of the two cellular membranes that surround bacteria in protrusions during cell-to-cell spread. Is sufficient to induce macrophage apoptosis through activation of the interleukin-1 beta converting enzyme (ICE) in infected macrophages. In epithelial cells, causes cell-cycle arrest by targeting host MAD2L2, an anaphase-promoting complex/cyclosome (APC) inhibitor. The chain is Type 3 secretion system translocon protein SctE from Shigella flexneri.